A 536-amino-acid chain; its full sequence is DNA damage-binding protein CMR1 (536 aa).

Residues 36-45 are compositionally biased toward basic and acidic residues; it reads REAGVDDTHR. Positions 36–72 are disordered; that stretch reads REAGVDDTHRTVVKKKKSPSVSRGRSASPKVAPVATR. 6 WD repeats span residues 195 to 236, 251 to 291, 346 to 386, 403 to 442, 456 to 495, and 496 to 535; these read LVYE…LSEN, FFTK…SNDI, LSDK…KKPE, DSRL…LPDD, GRWT…LAHL, and PTAT…KEEE.

Belongs to the WD repeat DDB2/WDR76 family.

Its function is as follows. DNA-binding protein that binds to both single- and double-stranded DNA. Binds preferentially to UV-damaged DNA. May be involved in DNA-metabolic processes. The polypeptide is DNA damage-binding protein CMR1 (Vanderwaltozyma polyspora (strain ATCC 22028 / DSM 70294 / BCRC 21397 / CBS 2163 / NBRC 10782 / NRRL Y-8283 / UCD 57-17) (Kluyveromyces polysporus)).